We begin with the raw amino-acid sequence, 95 residues long: Small ribosomal subunit protein bS6 (95 aa).

It belongs to the bacterial ribosomal protein bS6 family.

Its function is as follows. Binds together with bS18 to 16S ribosomal RNA. The sequence is that of Small ribosomal subunit protein bS6 from Symbiobacterium thermophilum (strain DSM 24528 / JCM 14929 / IAM 14863 / T).